The sequence spans 96 residues: Large ribosomal subunit protein uL23 (96 aa).

Belongs to the universal ribosomal protein uL23 family. In terms of assembly, part of the 50S ribosomal subunit. Contacts protein L29, and trigger factor when it is bound to the ribosome.

Its function is as follows. One of the early assembly proteins it binds 23S rRNA. One of the proteins that surrounds the polypeptide exit tunnel on the outside of the ribosome. Forms the main docking site for trigger factor binding to the ribosome. The chain is Large ribosomal subunit protein uL23 from Oleidesulfovibrio alaskensis (strain ATCC BAA-1058 / DSM 17464 / G20) (Desulfovibrio alaskensis).